The chain runs to 270 residues: Putative protein-disulfide oxidoreductase RT0103 (270 aa).

The signal sequence occupies residues 1–17 (MKNIFIVLIFLFLSSCA). Residues 71 to 264 (SVLTQDLHEQ…ISRAVDRALE (194 aa)) form the Thioredoxin domain. Cysteine 117 and cysteine 120 are disulfide-bonded.

The protein belongs to the thioredoxin family. DsbA subfamily.

The protein resides in the periplasm. In terms of biological role, may be required for disulfide bond formation in some proteins. This Rickettsia typhi (strain ATCC VR-144 / Wilmington) protein is Putative protein-disulfide oxidoreductase RT0103.